A 190-amino-acid chain; its full sequence is Putative CRISPR system CMR subunit Cmr7 2 (190 aa).

It belongs to the CRISPR system Cmr7 family. In terms of assembly, homodimer.

In terms of biological role, CRISPR (clustered regularly interspaced short palindromic repeat) is an adaptive immune system that provides protection against mobile genetic elements (viruses, transposable elements and conjugative plasmids). CRISPR clusters contain spacers, sequences complementary to antecedent mobile elements, and target invading nucleic acids. CRISPR clusters are transcribed and processed into CRISPR RNA (crRNA). This Saccharolobus solfataricus (strain ATCC 35092 / DSM 1617 / JCM 11322 / P2) (Sulfolobus solfataricus) protein is Putative CRISPR system CMR subunit Cmr7 2 (cmr7b).